Consider the following 386-residue polypeptide: Succinate--CoA ligase [ADP-forming] subunit beta (386 aa).

The ATP-grasp domain maps to 9 to 244; it reads KEILRKYGVP…HDEEDPLETR (236 aa). ATP-binding positions include lysine 46, 53-55, glutamate 99, cysteine 102, and glutamate 107; that span reads GRG. The Mg(2+) site is built by asparagine 199 and aspartate 213. Substrate is bound by residues asparagine 264 and 321-323; that span reads GIM.

This sequence belongs to the succinate/malate CoA ligase beta subunit family. As to quaternary structure, heterotetramer of two alpha and two beta subunits. Mg(2+) serves as cofactor.

It carries out the reaction succinate + ATP + CoA = succinyl-CoA + ADP + phosphate. It catalyses the reaction GTP + succinate + CoA = succinyl-CoA + GDP + phosphate. It participates in carbohydrate metabolism; tricarboxylic acid cycle; succinate from succinyl-CoA (ligase route): step 1/1. Its function is as follows. Succinyl-CoA synthetase functions in the citric acid cycle (TCA), coupling the hydrolysis of succinyl-CoA to the synthesis of either ATP or GTP and thus represents the only step of substrate-level phosphorylation in the TCA. The beta subunit provides nucleotide specificity of the enzyme and binds the substrate succinate, while the binding sites for coenzyme A and phosphate are found in the alpha subunit. This chain is Succinate--CoA ligase [ADP-forming] subunit beta, found in Rickettsia akari (strain Hartford).